A 173-amino-acid chain; its full sequence is Regulator of ribonuclease activity A (173 aa).

It belongs to the RraA family. As to quaternary structure, homotrimer. Binds to both RNA-binding sites in the C-terminal region of Rne and to RhlB.

The protein resides in the cytoplasm. Functionally, globally modulates RNA abundance by binding to RNase E (Rne) and regulating its endonucleolytic activity. Can modulate Rne action in a substrate-dependent manner by altering the composition of the degradosome. Modulates RNA-binding and helicase activities of the degradosome. This Vibrio vulnificus (strain CMCP6) protein is Regulator of ribonuclease activity A.